The primary structure comprises 86 residues: Protein IDA-LIKE 1 (86 aa).

The signal sequence occupies residues 1-27 (MNLSHKTMFMTLYIVFLLIFGSYNATA).

Expressed in roots.

It is found in the secreted. It localises to the extracellular space. Involved in an ethylene-independent separation step of floral abscission. May act with RLK5 and HSL2 as ligand-receptor pairs. This chain is Protein IDA-LIKE 1 (IDL1), found in Arabidopsis thaliana (Mouse-ear cress).